The primary structure comprises 816 residues: Leucine--tRNA ligase (816 aa).

The 'HIGH' region signature appears at 46-56 (PYPSGALHMGH). The 'KMSKS' region motif lies at 638 to 642 (KMSKS). K641 lines the ATP pocket.

This sequence belongs to the class-I aminoacyl-tRNA synthetase family.

Its subcellular location is the cytoplasm. The enzyme catalyses tRNA(Leu) + L-leucine + ATP = L-leucyl-tRNA(Leu) + AMP + diphosphate. The protein is Leucine--tRNA ligase of Xanthomonas campestris pv. campestris (strain ATCC 33913 / DSM 3586 / NCPPB 528 / LMG 568 / P 25).